We begin with the raw amino-acid sequence, 517 residues long: Protein NETWORKED 4B (517 aa).

Disordered regions lie at residues 1–29 and 101–159; these read MASSTAQSKKQFKRSMTKKSHSWWWDSHN and LQKN…EDGD. Positions 10-21 are enriched in basic residues; the sequence is KQFKRSMTKKSH. The NAB domain maps to 21–101; it reads HSWWWDSHNC…ERYDQASGEL (81 aa). Low complexity predominate over residues 107 to 119; it reads SEIQSQSSLEISS. Over residues 121-135 the composition is skewed to basic and acidic residues; sequence TKEKLSRRQSSHKEE. The stretch at 156–486 forms a coiled coil; sequence EDGDEALIRR…EQKREAIRQL (331 aa).

The protein belongs to the NET family.

Its function is as follows. Plant-specific actin binding protein. May be part of a membrane-cytoskeletal adapter complex. The polypeptide is Protein NETWORKED 4B (Arabidopsis thaliana (Mouse-ear cress)).